The primary structure comprises 128 residues: Large ribosomal subunit protein bL19 (128 aa).

Belongs to the bacterial ribosomal protein bL19 family.

In terms of biological role, this protein is located at the 30S-50S ribosomal subunit interface and may play a role in the structure and function of the aminoacyl-tRNA binding site. The sequence is that of Large ribosomal subunit protein bL19 from Caldicellulosiruptor bescii (strain ATCC BAA-1888 / DSM 6725 / KCTC 15123 / Z-1320) (Anaerocellum thermophilum).